Consider the following 296-residue polypeptide: Acetylglutamate kinase (296 aa).

Substrate contacts are provided by residues 71–72, Arg-93, and Asn-186; that span reads GG.

The protein belongs to the acetylglutamate kinase family. ArgB subfamily.

The protein resides in the cytoplasm. It carries out the reaction N-acetyl-L-glutamate + ATP = N-acetyl-L-glutamyl 5-phosphate + ADP. It participates in amino-acid biosynthesis; L-arginine biosynthesis; N(2)-acetyl-L-ornithine from L-glutamate: step 2/4. Functionally, catalyzes the ATP-dependent phosphorylation of N-acetyl-L-glutamate. The chain is Acetylglutamate kinase from Synechococcus sp. (strain RCC307).